The chain runs to 279 residues: Diaminopimelate epimerase (279 aa).

The substrate site is built by asparagine 13 and asparagine 66. Residue cysteine 75 is the Proton donor of the active site. Residues 76–77, asparagine 164, asparagine 197, and 215–216 each bind substrate; these read GN and ER. Cysteine 224 serves as the catalytic Proton acceptor. 225-226 contacts substrate; that stretch reads GT.

The protein belongs to the diaminopimelate epimerase family. In terms of assembly, homodimer.

It is found in the cytoplasm. It catalyses the reaction (2S,6S)-2,6-diaminopimelate = meso-2,6-diaminopimelate. It participates in amino-acid biosynthesis; L-lysine biosynthesis via DAP pathway; DL-2,6-diaminopimelate from LL-2,6-diaminopimelate: step 1/1. Catalyzes the stereoinversion of LL-2,6-diaminopimelate (L,L-DAP) to meso-diaminopimelate (meso-DAP), a precursor of L-lysine and an essential component of the bacterial peptidoglycan. This chain is Diaminopimelate epimerase, found in Nostoc punctiforme (strain ATCC 29133 / PCC 73102).